The primary structure comprises 288 residues: UTP--glucose-1-phosphate uridylyltransferase (288 aa).

It belongs to the UDPGP type 2 family.

The enzyme catalyses alpha-D-glucose 1-phosphate + UTP + H(+) = UDP-alpha-D-glucose + diphosphate. It participates in glycolipid metabolism; diglucosyl-diacylglycerol biosynthesis. Catalyzes the formation of UDP-glucose from glucose-1-phosphate and UTP. This is an intermediate step in the biosynthesis of diglucosyl-diacylglycerol (Glc2-DAG), i.e. the predominant glycolipid found in the S.aureus membrane, which is also used as a membrane anchor for lipoteichoic acid (LTA). In Staphylococcus aureus (strain MRSA252), this protein is UTP--glucose-1-phosphate uridylyltransferase (gtaB).